The following is a 337-amino-acid chain: Protein BIG GRAIN 1-like (337 aa).

Disordered regions lie at residues 1 to 32 (MRDMEMRWAAPAPAARGRGRARRRAPDQPSFS), 120 to 163 (SAAG…RPAS), and 179 to 235 (KRPS…PSRS). Residues 137–146 (HEQPDVEKTA) show a composition bias toward basic and acidic residues. Low complexity-rich tracts occupy residues 150-163 (PGSASARACRRPAS) and 195-209 (PACSTAPPSSSSSYA).

It belongs to the BIG GRAIN 1 (BG1) plant protein family.

The protein localises to the cell membrane. Its function is as follows. Involved in auxin transport. Regulator of the auxin signaling pathway. The polypeptide is Protein BIG GRAIN 1-like (Oryza sativa subsp. japonica (Rice)).